The following is a 417-amino-acid chain: uncharacterized protein (417 aa).

Transmembrane regions (helical) follow at residues Met-1 to Ser-21, Val-32 to Gly-52, Val-96 to Met-116, Leu-168 to Ala-188, Val-192 to Ala-212, Ile-261 to Phe-281, Leu-286 to Thr-306, Ala-351 to Gly-371, and Val-392 to Leu-412.

It belongs to the concentrative nucleoside transporter (CNT) (TC 2.A.41) family.

The protein resides in the cell inner membrane. This is an uncharacterized protein from Haemophilus influenzae (strain ATCC 51907 / DSM 11121 / KW20 / Rd).